The sequence spans 226 residues: Small ribosomal subunit protein uS3 (226 aa).

The region spanning 36–104 is the KH type-2 domain; it reads IRKYLENRLS…KIQINIFEIK (69 aa).

This sequence belongs to the universal ribosomal protein uS3 family. Part of the 30S ribosomal subunit. Forms a tight complex with proteins S10 and S14.

In terms of biological role, binds the lower part of the 30S subunit head. Binds mRNA in the 70S ribosome, positioning it for translation. This chain is Small ribosomal subunit protein uS3, found in Karelsulcia muelleri (strain GWSS) (Sulcia muelleri).